A 153-amino-acid polypeptide reads, in one-letter code: Riboflavin synthase (153 aa).

Belongs to the DMRL synthase family. In terms of assembly, homooligomer. The cofactor is Mg(2+).

It catalyses the reaction 2 6,7-dimethyl-8-(1-D-ribityl)lumazine + H(+) = 5-amino-6-(D-ribitylamino)uracil + riboflavin. Its pathway is cofactor biosynthesis; riboflavin biosynthesis; riboflavin from 2-hydroxy-3-oxobutyl phosphate and 5-amino-6-(D-ribitylamino)uracil: step 2/2. With respect to regulation, inhibited by EDTA. In Methanothermobacter thermautotrophicus (strain ATCC 29096 / DSM 1053 / JCM 10044 / NBRC 100330 / Delta H) (Methanobacterium thermoautotrophicum), this protein is Riboflavin synthase (ribC).